We begin with the raw amino-acid sequence, 187 residues long: MKKPSLIFLTGFSTSGKSTIGPLLANSLGFEFIDIDKEIVDREQKSINEIFAEKGEPYFRELEYNVLSSISQSEDLVVALGGGTLENDKCFEFIRKAGTLVYLKSDVATLARRLSHKEDRPLMKGENGEKLSIEDISDRVEKLLAKREPRYSAAEILALTDKTPLGVTIENLTRQIERHIRANCKTN.

14 to 19 provides a ligand contact to ATP; that stretch reads TSGKST. Serine 18 serves as a coordination point for Mg(2+). Substrate is bound by residues aspartate 36, arginine 60, and glycine 82. Position 120 (arginine 120) interacts with ATP. Position 147 (arginine 147) interacts with substrate.

This sequence belongs to the shikimate kinase family. Monomer. It depends on Mg(2+) as a cofactor.

Its subcellular location is the cytoplasm. It catalyses the reaction shikimate + ATP = 3-phosphoshikimate + ADP + H(+). It functions in the pathway metabolic intermediate biosynthesis; chorismate biosynthesis; chorismate from D-erythrose 4-phosphate and phosphoenolpyruvate: step 5/7. Its function is as follows. Catalyzes the specific phosphorylation of the 3-hydroxyl group of shikimic acid using ATP as a cosubstrate. The protein is Shikimate kinase of Chloroherpeton thalassium (strain ATCC 35110 / GB-78).